Reading from the N-terminus, the 425-residue chain is Histidinol dehydrogenase (425 aa).

Residues S231, Q253, and H256 each contribute to the substrate site. Positions 253 and 256 each coordinate Zn(2+). Catalysis depends on proton acceptor residues E321 and H322. Substrate is bound by residues H322, D355, E409, and H414. Residue D355 participates in Zn(2+) binding. H414 is a Zn(2+) binding site.

The protein belongs to the histidinol dehydrogenase family. Zn(2+) serves as cofactor.

It carries out the reaction L-histidinol + 2 NAD(+) + H2O = L-histidine + 2 NADH + 3 H(+). It participates in amino-acid biosynthesis; L-histidine biosynthesis; L-histidine from 5-phospho-alpha-D-ribose 1-diphosphate: step 9/9. Its function is as follows. Catalyzes the sequential NAD-dependent oxidations of L-histidinol to L-histidinaldehyde and then to L-histidine. The polypeptide is Histidinol dehydrogenase (Carboxydothermus hydrogenoformans (strain ATCC BAA-161 / DSM 6008 / Z-2901)).